Reading from the N-terminus, the 356-residue chain is Epoxide hydrolase B (356 aa).

An AB hydrolase-1 domain is found at 28–129 (PLVVLLHGFP…RCAGVVGISV (102 aa)). The Nucleophile role is filled by Asp-104. The active-site Proton acceptor is the His-333.

The protein belongs to the AB hydrolase superfamily. Epoxide hydrolase family. Homodimer.

It catalyses the reaction an epoxide + H2O = an ethanediol. Its function is as follows. Could be involved in detoxification of extraneous host-cell epoxides. Catalyzes the hydrolysis of small aromatic epoxide-containing substrates such as trans-1,3-diphenylpropene oxide, trans and cis-stilbene oxide, and terpenoid epoxide. The polypeptide is Epoxide hydrolase B (Mycobacterium tuberculosis (strain CDC 1551 / Oshkosh)).